The following is a 129-amino-acid chain: Small ribosomal subunit protein uS11 (129 aa).

This sequence belongs to the universal ribosomal protein uS11 family. As to quaternary structure, part of the 30S ribosomal subunit.

Located on the platform of the 30S subunit. The protein is Small ribosomal subunit protein uS11 of Haloarcula marismortui (strain ATCC 43049 / DSM 3752 / JCM 8966 / VKM B-1809) (Halobacterium marismortui).